Here is a 233-residue protein sequence, read N- to C-terminus: Ribose-5-phosphate isomerase A (233 aa).

Substrate-binding positions include 28–31 (TGST), 85–88 (DGAD), and 98–101 (KGLG). Glutamate 107 serves as the catalytic Proton acceptor. Lysine 125 contacts substrate.

Belongs to the ribose 5-phosphate isomerase family. As to quaternary structure, homodimer.

The catalysed reaction is aldehydo-D-ribose 5-phosphate = D-ribulose 5-phosphate. The protein operates within carbohydrate degradation; pentose phosphate pathway; D-ribose 5-phosphate from D-ribulose 5-phosphate (non-oxidative stage): step 1/1. Its function is as follows. Catalyzes the reversible conversion of ribose-5-phosphate to ribulose 5-phosphate. The protein is Ribose-5-phosphate isomerase A of Roseiflexus sp. (strain RS-1).